We begin with the raw amino-acid sequence, 229 residues long: ATP synthase subunit a (229 aa).

6 consecutive transmembrane segments (helical) span residues 25 to 45 (ADAI…SILA), 82 to 102 (FFPL…IGLI), 111 to 131 (NINT…IVGI), 142 to 162 (FLGP…IGHF), 181 to 201 (LVLM…MMLM), and 202 to 222 (GVLV…IYIQ).

This sequence belongs to the ATPase A chain family. As to quaternary structure, F-type ATPases have 2 components, CF(1) - the catalytic core - and CF(0) - the membrane proton channel. CF(1) has five subunits: alpha(3), beta(3), gamma(1), delta(1), epsilon(1). CF(0) has three main subunits: a(1), b(2) and c(9-12). The alpha and beta chains form an alternating ring which encloses part of the gamma chain. CF(1) is attached to CF(0) by a central stalk formed by the gamma and epsilon chains, while a peripheral stalk is formed by the delta and b chains.

The protein localises to the cell inner membrane. Key component of the proton channel; it plays a direct role in the translocation of protons across the membrane. This Geotalea daltonii (strain DSM 22248 / JCM 15807 / FRC-32) (Geobacter daltonii) protein is ATP synthase subunit a.